A 118-amino-acid polypeptide reads, in one-letter code: Beta-2-microglobulin (118 aa).

The first 21 residues, 1 to 21, serve as a signal peptide directing secretion; the sequence is MESRWGIVVIGLLCCVSWVEA. Residues 26 to 113 form the Ig-like C1-type domain; the sequence is PKIQVYTRSP…THNSVTKSVK (88 aa). An intrachain disulfide couples cysteine 46 to cysteine 101.

The protein belongs to the beta-2-microglobulin family. Heterodimer of an alpha chain and a beta chain. Beta-2-microglobulin is the beta-chain of major histocompatibility complex class I molecules.

The protein localises to the secreted. In terms of biological role, component of the class I major histocompatibility complex (MHC). Involved in the presentation of peptide antigens to the immune system. The sequence is that of Beta-2-microglobulin (B2M) from Tachyglossus aculeatus aculeatus (Southeast Australian short-beaked echidna).